The sequence spans 164 residues: NADH-quinone oxidoreductase subunit B (164 aa).

[4Fe-4S] cluster-binding residues include Cys-38, Cys-39, Cys-104, and Cys-133.

The protein belongs to the complex I 20 kDa subunit family. As to quaternary structure, NDH-1 is composed of 14 different subunits. Subunits NuoB, C, D, E, F, and G constitute the peripheral sector of the complex. [4Fe-4S] cluster serves as cofactor.

It is found in the cell inner membrane. The enzyme catalyses a quinone + NADH + 5 H(+)(in) = a quinol + NAD(+) + 4 H(+)(out). In terms of biological role, NDH-1 shuttles electrons from NADH, via FMN and iron-sulfur (Fe-S) centers, to quinones in the respiratory chain. The immediate electron acceptor for the enzyme in this species is believed to be ubiquinone. Couples the redox reaction to proton translocation (for every two electrons transferred, four hydrogen ions are translocated across the cytoplasmic membrane), and thus conserves the redox energy in a proton gradient. The protein is NADH-quinone oxidoreductase subunit B of Protochlamydia amoebophila (strain UWE25).